The following is a 195-amino-acid chain: Interferon omega-2 (195 aa).

An N-terminal signal peptide occupies residues 1–23 (MALLPSLLTALVVYELWPCGALG). 2 disulfide bridges follow: Cys24/Cys122 and Cys52/Cys162. An N-linked (GlcNAc...) asparagine glycan is attached at Asn101.

Belongs to the alpha/beta interferon family.

It is found in the secreted. The protein is Interferon omega-2 of Equus caballus (Horse).